Here is a 137-residue protein sequence, read N- to C-terminus: Large ribosomal subunit protein uL16 (137 aa).

Belongs to the universal ribosomal protein uL16 family. As to quaternary structure, part of the 50S ribosomal subunit.

In terms of biological role, binds 23S rRNA and is also seen to make contacts with the A and possibly P site tRNAs. The protein is Large ribosomal subunit protein uL16 of Brucella abortus (strain S19).